A 50-amino-acid polypeptide reads, in one-letter code: Alpha-conotoxin CnIG (50 aa).

The N-terminal stretch at 1 to 7 is a signal peptide; the sequence is LTTTVVS. Positions 1–13 are enriched in polar residues; it reads LTTTVVSFPSDSA. The interval 1–26 is disordered; that stretch reads LTTTVVSFPSDSASDGRDNEAKDERS. Residues 8–35 constitute a propeptide that is removed on maturation; sequence FPSDSASDGRDNEAKDERSDMYELKRNG. Residues 14-26 show a composition bias toward basic and acidic residues; the sequence is SDGRDNEAKDERS. Intrachain disulfides connect C37-C42 and C38-C48. A Cysteine amide modification is found at C48.

Belongs to the conotoxin A superfamily. Expressed by the venom duct.

It localises to the secreted. The sequence is that of Alpha-conotoxin CnIG from Conus consors (Singed cone).